The chain runs to 414 residues: uncharacterized protein (414 aa).

The Lumenal portion of the chain corresponds to 1–66 (MNPSVPKVMK…LQRISKDYLK (66 aa)). The tract at residues 20–51 (SKEMNDTSLQLPSTTRSLSPKESNSNEDFNVD) is disordered. A compositionally biased stretch (polar residues) spans 25–51 (DTSLQLPSTTRSLSPKESNSNEDFNVD). K40 participates in a covalent cross-link: Glycyl lysine isopeptide (Lys-Gly) (interchain with G-Cter in ubiquitin). The chain crosses the membrane as a helical span at residues 67-87 (PNIGLVLLTVSYFFNSAMVVS). An EamA 1 domain is found at 78-215 (YFFNSAMVVS…SLLGVVLIVR (138 aa)). Over 88-106 (TKVLENDPDDIANDRQIKP) the chain is Cytoplasmic. The helical transmembrane segment at 107 to 127 (LQILLVRMVITYIGTLIYMYI) threads the bilayer. Topologically, residues 128–144 (NKSTISDVPFGKPEVRK) are lumenal. The helical transmembrane segment at 145 to 167 (WLVLRGCTGFFGVFGMYYSLMYL) threads the bilayer. At 168-171 (TISD) the chain is on the cytoplasmic side. A helical membrane pass occupies residues 172–191 (AVLITFLAPSLTIFLSWVIL). Residues 192–199 (RERFTKVE) lie on the Lumenal side of the membrane. The chain crosses the membrane as a helical span at residues 200-220 (ALGSLISLLGVVLIVRPSFLF). Topologically, residues 221–241 (GTPELTDSSSQIVESSDPKSR) are cytoplasmic. The helical transmembrane segment at 242-262 (LIATLVGLWGVLGMSCVYIII) threads the bilayer. In terms of domain architecture, EamA 2 spans 253–379 (LGMSCVYIII…IISATLWVIR (127 aa)). Topologically, residues 263-269 (RYIGKRA) are lumenal. A helical transmembrane segment spans residues 270–290 (HAIMSVSYFSLITAIVSFIGI). Residues 291 to 307 (NTIPSMKFQIPHSKKQW) are Cytoplasmic-facing. Residues 308 to 328 (ILFGNLGVSGFIFQLLLTMGI) form a helical membrane-spanning segment. The Lumenal segment spans residues 329-357 (QRERAGRGSLMTYTQLLYAVFWDVALYKH). Residues 358 to 378 (WPNIWSWIGMIIIISATLWVI) traverse the membrane as a helical segment. Residues 379–414 (RIRAANNETTAKDLTPIIDDEENSIPLTEFDLSDSK) lie on the Cytoplasmic side of the membrane.

This sequence to yeast YPL264c.

It localises to the membrane. This is an uncharacterized protein from Saccharomyces cerevisiae (strain ATCC 204508 / S288c) (Baker's yeast).